Consider the following 523-residue polypeptide: Bifunctional purine biosynthesis protein PurH (523 aa).

In terms of domain architecture, MGS-like spans 1–145 (MIKQALLSVS…KNHRDVTVIV (145 aa)).

This sequence belongs to the PurH family.

The enzyme catalyses (6R)-10-formyltetrahydrofolate + 5-amino-1-(5-phospho-beta-D-ribosyl)imidazole-4-carboxamide = 5-formamido-1-(5-phospho-D-ribosyl)imidazole-4-carboxamide + (6S)-5,6,7,8-tetrahydrofolate. It catalyses the reaction IMP + H2O = 5-formamido-1-(5-phospho-D-ribosyl)imidazole-4-carboxamide. The protein operates within purine metabolism; IMP biosynthesis via de novo pathway; 5-formamido-1-(5-phospho-D-ribosyl)imidazole-4-carboxamide from 5-amino-1-(5-phospho-D-ribosyl)imidazole-4-carboxamide (10-formyl THF route): step 1/1. Its pathway is purine metabolism; IMP biosynthesis via de novo pathway; IMP from 5-formamido-1-(5-phospho-D-ribosyl)imidazole-4-carboxamide: step 1/1. This Cupriavidus pinatubonensis (strain JMP 134 / LMG 1197) (Cupriavidus necator (strain JMP 134)) protein is Bifunctional purine biosynthesis protein PurH.